The following is a 505-amino-acid chain: MSFVEICLVLATIGLLLFKWSTGTFKAFEGRNLYFEKPYPFLGNMAASALQKASFQKQISEFYNRTRHHKLVGLFNLRTPMIQINDPQLIKKICVKDFDHFPNHQTLNIPNERLVNDMLNVMRDQHWRNMRSVLTPVFTSAKMRNMFTLMNESFAQCLEHLKSSQPIAAGENAFELDMKVLCNKLSNDVIATTAFGLKVNSFDDPENEFHTIGKTLAFSRGLPFLKFMMCLLAPKVFNFFKLTIFDSTNVEYFVRLVVDAMQYREKHNITRPDMIQLLMEAKKESKDNWTDDEIVAQCFIFFFAAFENNSNLICTTAYELLRNLDIQERLYEEVKETQEALKGAPLTYDAAQEMTYMDMVISESLRKWTLSAAADRLCAKDYTLTDDEGTKLFEFKAGDNINIPICGLHWDERFFPQPQRFDPERFSERRKKDLIPYTYLPFGVGPRSCIGNRYAVMQAKGMLYNLMLNYKIEASPRTTRDMWESARGFNIIPTTGFWMQLVSRK.

Heme is bound at residue C449.

Belongs to the cytochrome P450 family. Requires heme as cofactor.

It localises to the endoplasmic reticulum membrane. The protein resides in the microsome membrane. Functionally, may be involved in the metabolism of insect hormones and in the breakdown of synthetic insecticides. The sequence is that of Cytochrome P450 9b1 (Cyp9b1) from Drosophila melanogaster (Fruit fly).